The sequence spans 671 residues: Autophagy-related protein 22-2 (671 aa).

Composition is skewed to polar residues over residues 1 to 10 (MVPRNFSESQ) and 19 to 34 (PSNS…SSSF). Residues 1-67 (MVPRNFSESQ…RDVPAQYAGE (67 aa)) are disordered. N-linked (GlcNAc...) asparagine glycosylation is found at asparagine 5 and asparagine 21. Residues 39-60 (ERSSSADHDSMGPDIGSAHRDV) show a composition bias toward basic and acidic residues. 4 consecutive transmembrane segments (helical) span residues 83-103 (YGFA…PITL), 155-175 (SFAM…VVSI), 188-208 (LLLF…TVVP), and 212-232 (LLGA…FVLL). The segment at 251–271 (PDFSPEFRPSSVDESPPEHSL) is disordered. A helical membrane pass occupies residues 324–344 (IGIGYSAGLFLQCVSIVIIWL). Asparagine 346 carries an N-linked (GlcNAc...) asparagine glycan. Helical transmembrane passes span 354-374 (LVLF…ALWL), 422-442 (FFLA…GTAV), 457-477 (GLIN…WAAI), 491-511 (ACIC…LPIV), 523-543 (WEMY…SSYC), 560-582 (YALY…GAIV), and 591-611 (AFWF…FVNV). The segment at 634–671 (ESAGEGSRGSSIDHESGQNEGLIYPRVGENAGRGRNDI) is disordered.

The protein belongs to the ATG22 family.

The protein resides in the vacuole membrane. Its function is as follows. Vacuolar effluxer which mediate the efflux of amino acids resulting from autophagic degradation. The release of autophagic amino acids allows the maintenance of protein synthesis and viability during nitrogen starvation. This is Autophagy-related protein 22-2 (atg22-2) from Sclerotinia sclerotiorum (strain ATCC 18683 / 1980 / Ss-1) (White mold).